A 311-amino-acid polypeptide reads, in one-letter code: Ribosomal RNA small subunit methyltransferase H (311 aa).

S-adenosyl-L-methionine is bound by residues 35–37 (GGH), aspartate 55, phenylalanine 80, aspartate 102, and glutamine 109.

This sequence belongs to the methyltransferase superfamily. RsmH family.

The protein resides in the cytoplasm. It carries out the reaction cytidine(1402) in 16S rRNA + S-adenosyl-L-methionine = N(4)-methylcytidine(1402) in 16S rRNA + S-adenosyl-L-homocysteine + H(+). Specifically methylates the N4 position of cytidine in position 1402 (C1402) of 16S rRNA. This chain is Ribosomal RNA small subunit methyltransferase H, found in Pseudoalteromonas atlantica (strain T6c / ATCC BAA-1087).